The sequence spans 529 residues: Phosphoenolpyruvate carboxykinase (ATP) (529 aa).

Residues Arg-55, Tyr-190, and Lys-196 each coordinate substrate. Residues Lys-196, His-215, and 231–239 contribute to the ATP site; that span reads GLSGTGKTT. Lys-196 and His-215 together coordinate Mn(2+). Asp-252 is a Mn(2+) binding site. ATP-binding residues include Glu-280, Arg-317, and Thr-442. Residue Arg-317 coordinates substrate.

This sequence belongs to the phosphoenolpyruvate carboxykinase (ATP) family. The cofactor is Mn(2+).

Its subcellular location is the cytoplasm. It carries out the reaction oxaloacetate + ATP = phosphoenolpyruvate + ADP + CO2. Its pathway is carbohydrate biosynthesis; gluconeogenesis. Involved in the gluconeogenesis. Catalyzes the conversion of oxaloacetate (OAA) to phosphoenolpyruvate (PEP) through direct phosphoryl transfer between the nucleoside triphosphate and OAA. This Deinococcus geothermalis (strain DSM 11300 / CIP 105573 / AG-3a) protein is Phosphoenolpyruvate carboxykinase (ATP).